Reading from the N-terminus, the 554-residue chain is Malate synthase 1 (554 aa).

Arg-177 acts as the Proton acceptor in catalysis. Asp-457 serves as the catalytic Proton donor. The SKL peroxisome targeting motif signature appears at Ser-552–Leu-554.

This sequence belongs to the malate synthase family. Interacts with PEX9.

The protein localises to the peroxisome matrix. It catalyses the reaction glyoxylate + acetyl-CoA + H2O = (S)-malate + CoA + H(+). It functions in the pathway carbohydrate metabolism; glyoxylate cycle; (S)-malate from isocitrate: step 2/2. Functionally, malate synthase which takes part in the glyoxylate cycle. MLS1 activity is essential for cells to grow on oleic acid as a sole carbon source. Two steps of the glyoxylate cycle take place in the cytosol, the splitting of isocitrate into succinate and glyoxylate, and the dehydrogenation of malate to oxaloacetate. However, the formation of malate from glyoxylate and acetyl-CoA undertaken MLS1, occurs in the peroxisomes when cells are grown on oleic acid. The source of acetyl-CoA being either peroxisomal when breaking down fatty acids, or cytosolic when extra-cellular two-carbon substrates are used, therefore, although not strictly essential, the peroxisomal localization of MLS1 appears to be advantageous for cells growing on oleic acid, in that acetyl-CoA production and utilization are thereby intimately compartmentalized together to increase efficiency. The sequence is that of Malate synthase 1 from Saccharomyces cerevisiae (strain ATCC 204508 / S288c) (Baker's yeast).